The sequence spans 348 residues: Fructose-1,6-bisphosphatase class 1 2 (348 aa).

Mg(2+) is bound by residues Glu-93, Asp-117, Leu-119, and Asp-120. Residues 120-123, Asn-213, Tyr-244, and Lys-274 contribute to the substrate site; that span reads DGSS. Glu-280 provides a ligand contact to Mg(2+).

This sequence belongs to the FBPase class 1 family. As to quaternary structure, homotetramer. Mg(2+) is required as a cofactor.

The protein localises to the cytoplasm. It carries out the reaction beta-D-fructose 1,6-bisphosphate + H2O = beta-D-fructose 6-phosphate + phosphate. Its pathway is carbohydrate biosynthesis; gluconeogenesis. The sequence is that of Fructose-1,6-bisphosphatase class 1 2 from Christiangramia forsetii (strain DSM 17595 / CGMCC 1.15422 / KT0803) (Gramella forsetii).